A 218-amino-acid polypeptide reads, in one-letter code: Large ribosomal subunit protein bL25 (218 aa).

It belongs to the bacterial ribosomal protein bL25 family. CTC subfamily. As to quaternary structure, part of the 50S ribosomal subunit; part of the 5S rRNA/L5/L18/L25 subcomplex. Contacts the 5S rRNA. Binds to the 5S rRNA independently of L5 and L18.

Its function is as follows. This is one of the proteins that binds to the 5S RNA in the ribosome where it forms part of the central protuberance. The polypeptide is Large ribosomal subunit protein bL25 (Gluconobacter oxydans (strain 621H) (Gluconobacter suboxydans)).